A 388-amino-acid polypeptide reads, in one-letter code: Quinolone resistance protein NorA (388 aa).

12 consecutive transmembrane segments (helical) span residues 5-25 (IFVLYFNIFLIFLGIGLVIPV), 42-62 (LLVAAFALSQMIISPFGGTLA), 69-89 (LIICIGLILFSVSEFMFAVGH), 99-119 (VIGGMSAGMVMPGVTGLIADV), 129-149 (FGYMSAIINSGFILGPGIGGF), 157-177 (MPFYFAGALGILAFIMSVVLI), 201-221 (WKVFITPAILTLVLAFGLSAF), 239-259 (DISIAITGGGIFGALFQIYFF), 269-289 (LTFIAWSLIYSVIVLVLLVIA), 293-313 (WTIMVISFAVFIGFDMIRPAI), 331-351 (LNSTFTSMGNFIGPLIAGALF), and 355-375 (IEAPIYMAIGVSLAGVVIVLI).

Belongs to the major facilitator superfamily. TCR/Tet family.

It localises to the cell membrane. Involved in quinolone resistance. May constitute a membrane-associated active efflux pump of hydrophilic quinolones. The chain is Quinolone resistance protein NorA (norA) from Staphylococcus aureus (strain MRSA252).